The following is a 203-amino-acid chain: Large ribosomal subunit protein uL13 (203 aa).

An N-acetylalanine modification is found at Ala2. At Arg59 the chain carries Citrulline. Ser77 is subject to Phosphoserine. Citrulline is present on Arg140. Lys191 bears the N6-acetyllysine mark.

This sequence belongs to the universal ribosomal protein uL13 family. Component of the 60S ribosome. Component of the GAIT complex. Interacts with EIF4G1. Post-translationally, phosphorylation at Ser-77 upon interferon-gamma treatment in macrophages involves a DAPK1-DAPK3 kinase cascade and is causing release from the ribosome, association with the GAIT complex and subsequent involvement in transcript-selective translation inhibition. Citrullinated by PADI4.

It is found in the cytoplasm. In terms of biological role, associated with ribosomes but is not required for canonical ribosome function and has extra-ribosomal functions. Component of the GAIT (gamma interferon-activated inhibitor of translation) complex which mediates interferon-gamma-induced transcript-selective translation inhibition in inflammation processes. Upon interferon-gamma activation and subsequent phosphorylation dissociates from the ribosome and assembles into the GAIT complex which binds to stem loop-containing GAIT elements in the 3'-UTR of diverse inflammatory mRNAs (such as ceruplasmin) and suppresses their translation. In the GAIT complex interacts with m7G cap-bound eIF4G at or near the eIF3-binding site and blocks the recruitment of the 43S ribosomal complex. Involved in methylation of rRNA. The sequence is that of Large ribosomal subunit protein uL13 (RPL13A) from Canis lupus familiaris (Dog).